The sequence spans 299 residues: Regucalcin (299 aa).

An a divalent metal cation-binding site is contributed by Glu18. Residues Arg101, Asn103, and Glu121 each contribute to the substrate site. Lys144 is modified (N6-succinyllysine). Residues Asn154 and Asp204 each contribute to the a divalent metal cation site. Asp204 serves as the catalytic Proton donor/acceptor. N6-succinyllysine is present on residues Lys244 and Lys253.

This sequence belongs to the SMP-30/CGR1 family. Monomer. Zn(2+) is required as a cofactor. The cofactor is Mn(2+). Requires Ca(2+) as cofactor. It depends on Mg(2+) as a cofactor.

Its subcellular location is the cytoplasm. The enzyme catalyses D-glucono-1,5-lactone + H2O = D-gluconate + H(+). It functions in the pathway cofactor biosynthesis; L-ascorbate biosynthesis via UDP-alpha-D-glucuronate pathway; L-ascorbate from UDP-alpha-D-glucuronate: step 3/4. Its function is as follows. Gluconolactonase with low activity towards other sugar lactones, including gulonolactone and galactonolactone. Catalyzes a key step in ascorbic acid (vitamin C) biosynthesis. Can also hydrolyze diisopropyl phosphorofluoridate and phenylacetate (in vitro). Calcium-binding protein. Modulates Ca(2+) signaling, and Ca(2+)-dependent cellular processes and enzyme activities. In Oryctolagus cuniculus (Rabbit), this protein is Regucalcin (RGN).